A 369-amino-acid polypeptide reads, in one-letter code: MMTEAQGPVVSIGSATVTYDHPPIISPVSYPKARPTQILDIRKRTSRIDLYHEILAGLRAKDKELPSLLLWNDRGLDLFSEILNSDEYYPRRRETQLLQTHVNEFTRSISSGERLIELGAGNLQKTVSVLRCLEQSRKHVEYCALDVSHAALQASITELKAQLPFASYVTIRGLLGTYNDCASWLKQSGATVRTTFLWLGNSIANFEPEDATSILADFLQTKASPSHSPQMIIAVDGCQDVEQILEAYDMPNKLSQKFVFNGLSHANQILGSEVFRPQHWTFEGKWNPVKSMHESFYVAKKPMSLDIGNERFHVHAGEKIRAITSGKWPKDKVTSICQSAGIKVLKGWTDEEGSYGKRVTQVYSRGSSC.

It belongs to the methyltransferase superfamily.

Its pathway is secondary metabolite biosynthesis. Functionally, N-methyltransferase; part of the gene cluster that mediates the biosynthesis of imizoquins A to D, tripeptide-derived alkaloids that serve a protective role against oxidative stress that are essential for normal germination. ImqB is a canonical three-module NRPS that assembles the tripeptide backbone of the imizoquins via condensation of Trp, Tyr, and Leu-derived precursors. N-methylation by imqF and phenol oxidation by imqC, followed by cyclization via the FAD-dependent oxidase imqH carry out the three-step transformation of L-tyrosine into tetrahydroisoquinoline. Importantly, this sequence requires the presence of a free amine in the tyrosine moiety, indicating that isoquinoline formation occurs prior to peptide bond formation. The imidazolidin-4-one ring of imizoquins could form following additional oxidation of the methyl-derived bridgehead carbon by imqH. Lastly, O-methylation by imqG and leucine hydroxylation by imqE complete biosynthesis of the imizoquins. The protein is N-methyltransferase imqF of Aspergillus flavus (strain ATCC 200026 / FGSC A1120 / IAM 13836 / NRRL 3357 / JCM 12722 / SRRC 167).